Reading from the N-terminus, the 229-residue chain is Large ribosomal subunit protein uL1 (229 aa).

Belongs to the universal ribosomal protein uL1 family. As to quaternary structure, part of the 50S ribosomal subunit.

Its function is as follows. Binds directly to 23S rRNA. The L1 stalk is quite mobile in the ribosome, and is involved in E site tRNA release. Protein L1 is also a translational repressor protein, it controls the translation of the L11 operon by binding to its mRNA. The sequence is that of Large ribosomal subunit protein uL1 from Caulobacter vibrioides (strain ATCC 19089 / CIP 103742 / CB 15) (Caulobacter crescentus).